The primary structure comprises 124 residues: Small ribosomal subunit protein uS12 (124 aa).

At D89 the chain carries 3-methylthioaspartic acid.

The protein belongs to the universal ribosomal protein uS12 family. In terms of assembly, part of the 30S ribosomal subunit. Contacts proteins S8 and S17. May interact with IF1 in the 30S initiation complex.

Functionally, with S4 and S5 plays an important role in translational accuracy. Interacts with and stabilizes bases of the 16S rRNA that are involved in tRNA selection in the A site and with the mRNA backbone. Located at the interface of the 30S and 50S subunits, it traverses the body of the 30S subunit contacting proteins on the other side and probably holding the rRNA structure together. The combined cluster of proteins S8, S12 and S17 appears to hold together the shoulder and platform of the 30S subunit. This Erwinia tasmaniensis (strain DSM 17950 / CFBP 7177 / CIP 109463 / NCPPB 4357 / Et1/99) protein is Small ribosomal subunit protein uS12.